The chain runs to 390 residues: ATP phosphoribosyltransferase regulatory subunit (390 aa).

The protein belongs to the class-II aminoacyl-tRNA synthetase family. HisZ subfamily. As to quaternary structure, heteromultimer composed of HisG and HisZ subunits.

The protein resides in the cytoplasm. Its pathway is amino-acid biosynthesis; L-histidine biosynthesis; L-histidine from 5-phospho-alpha-D-ribose 1-diphosphate: step 1/9. Its function is as follows. Required for the first step of histidine biosynthesis. May allow the feedback regulation of ATP phosphoribosyltransferase activity by histidine. The protein is ATP phosphoribosyltransferase regulatory subunit of Nitrosomonas eutropha (strain DSM 101675 / C91 / Nm57).